Reading from the N-terminus, the 95-residue chain is Large ribosomal subunit protein bL28 (95 aa).

It belongs to the bacterial ribosomal protein bL28 family.

This is Large ribosomal subunit protein bL28 from Zymomonas mobilis subsp. mobilis (strain ATCC 31821 / ZM4 / CP4).